A 249-amino-acid polypeptide reads, in one-letter code: Triosephosphate isomerase (249 aa).

Substrate-binding residues include Asn12 and Lys14. An N6-acetyllysine modification is found at Lys14. A 3'-nitrotyrosine modification is found at Tyr68. Ser80 and Ser106 each carry phosphoserine. Lys142 is covalently cross-linked (Glycyl lysine isopeptide (Lys-Gly) (interchain with G-Cter in SUMO1)). Residue Lys149 is modified to N6-succinyllysine. Lys156 carries the post-translational modification N6-acetyllysine; alternate. Lys156 carries the post-translational modification N6-succinyllysine; alternate. Ser159 is modified (phosphoserine). The active-site Proton acceptor is Glu166. Residue Thr173 is modified to Phosphothreonine. Residue Lys194 is modified to N6-acetyllysine; alternate. Lys194 is modified (N6-succinyllysine; alternate). At Lys194 the chain carries N6-methyllysine; alternate. Residue Ser198 is modified to Phosphoserine. Tyr209 carries the 3'-nitrotyrosine modification. Residue Ser212 is modified to Phosphoserine. Thr214 is subject to Phosphothreonine. The residue at position 223 (Ser223) is a Phosphoserine. Lys238 bears the N6-acetyllysine mark.

The protein belongs to the triosephosphate isomerase family. Homodimer.

The protein resides in the cytoplasm. The enzyme catalyses D-glyceraldehyde 3-phosphate = dihydroxyacetone phosphate. It carries out the reaction dihydroxyacetone phosphate = methylglyoxal + phosphate. Its pathway is carbohydrate biosynthesis; gluconeogenesis. It participates in carbohydrate degradation; glycolysis; D-glyceraldehyde 3-phosphate from glycerone phosphate: step 1/1. In terms of biological role, triosephosphate isomerase is an extremely efficient metabolic enzyme that catalyzes the interconversion between dihydroxyacetone phosphate (DHAP) and D-glyceraldehyde-3-phosphate (G3P) in glycolysis and gluconeogenesis. Its function is as follows. It is also responsible for the non-negligible production of methylglyoxal a reactive cytotoxic side-product that modifies and can alter proteins, DNA and lipids. The polypeptide is Triosephosphate isomerase (Mesocricetus auratus (Golden hamster)).